A 177-amino-acid chain; its full sequence is Large ribosomal subunit protein uL6 (177 aa).

The protein belongs to the universal ribosomal protein uL6 family. In terms of assembly, part of the 50S ribosomal subunit.

This protein binds to the 23S rRNA, and is important in its secondary structure. It is located near the subunit interface in the base of the L7/L12 stalk, and near the tRNA binding site of the peptidyltransferase center. The chain is Large ribosomal subunit protein uL6 from Rickettsia conorii (strain ATCC VR-613 / Malish 7).